A 143-amino-acid polypeptide reads, in one-letter code: Large ribosomal subunit protein uL11 (143 aa).

It belongs to the universal ribosomal protein uL11 family. Part of the ribosomal stalk of the 50S ribosomal subunit. Interacts with L10 and the large rRNA to form the base of the stalk. L10 forms an elongated spine to which L12 dimers bind in a sequential fashion forming a multimeric L10(L12)X complex. In terms of processing, one or more lysine residues are methylated.

Its function is as follows. Forms part of the ribosomal stalk which helps the ribosome interact with GTP-bound translation factors. The chain is Large ribosomal subunit protein uL11 from Cupriavidus pinatubonensis (strain JMP 134 / LMG 1197) (Cupriavidus necator (strain JMP 134)).